A 199-amino-acid chain; its full sequence is Protein ZNRD2 (199 aa).

Alanine 2 is modified (N-acetylalanine). Cysteine 53, cysteine 56, cysteine 70, and cysteine 73 together coordinate Zn(2+). The disordered stretch occupies residues 93–148; that stretch reads LSQAREHQLASSTEPASSSRPPSQPPVPRPEHCEGAAAGLKAAQAPPLPAAPPNTD. Serine 94 is subject to Phosphoserine. Positions 127–137 are enriched in low complexity; sequence GAAAGLKAAQA. The Nuclear export signal signature appears at 173–194; that stretch reads SLETSIQLCGLIRACAEALGSL.

Homodimer. Zn(2+) serves as cofactor. As to expression, expressed in the early postnatal brain.

The protein resides in the cytoplasm. In terms of biological role, might play a role in mitosis. Could be a centromere-associated protein. Antigenic molecule. May induce anti-centromere antibodies. This Mus musculus (Mouse) protein is Protein ZNRD2 (Znrd2).